We begin with the raw amino-acid sequence, 156 residues long: MEVRVIEGEFKGEGVKIGVVVARFNDLLTNELLSGALDCFERHSVEEVDVVKVPGSFEIPLVAKKLAESGKYDAVLALGAVVRGETKHFDLVANEVAKGVAKVSLDSGVPVIFGVITVEDELQGFNRAGVKSNKGFEYAMAALEMANLMKKLREKE.

Residues Phe24, 56-58, and 80-82 contribute to the 5-amino-6-(D-ribitylamino)uracil site; these read SFE and AVV. 85 to 86 is a binding site for (2S)-2-hydroxy-3-oxobutyl phosphate; that stretch reads ET. The active-site Proton donor is His88. Phe113 is a binding site for 5-amino-6-(D-ribitylamino)uracil. Arg127 serves as a coordination point for (2S)-2-hydroxy-3-oxobutyl phosphate.

Belongs to the DMRL synthase family.

The enzyme catalyses (2S)-2-hydroxy-3-oxobutyl phosphate + 5-amino-6-(D-ribitylamino)uracil = 6,7-dimethyl-8-(1-D-ribityl)lumazine + phosphate + 2 H2O + H(+). Its pathway is cofactor biosynthesis; riboflavin biosynthesis; riboflavin from 2-hydroxy-3-oxobutyl phosphate and 5-amino-6-(D-ribitylamino)uracil: step 1/2. Catalyzes the formation of 6,7-dimethyl-8-ribityllumazine by condensation of 5-amino-6-(D-ribitylamino)uracil with 3,4-dihydroxy-2-butanone 4-phosphate. This is the penultimate step in the biosynthesis of riboflavin. This Thermococcus kodakarensis (strain ATCC BAA-918 / JCM 12380 / KOD1) (Pyrococcus kodakaraensis (strain KOD1)) protein is 6,7-dimethyl-8-ribityllumazine synthase.